The following is a 393-amino-acid chain: Arginine biosynthesis bifunctional protein ArgJ 3 (393 aa).

6 residues coordinate substrate: T148, K170, T181, E260, N388, and T393. T181 (nucleophile) is an active-site residue.

Belongs to the ArgJ family. As to quaternary structure, heterotetramer of two alpha and two beta chains.

The protein resides in the cytoplasm. The catalysed reaction is N(2)-acetyl-L-ornithine + L-glutamate = N-acetyl-L-glutamate + L-ornithine. It carries out the reaction L-glutamate + acetyl-CoA = N-acetyl-L-glutamate + CoA + H(+). It participates in amino-acid biosynthesis; L-arginine biosynthesis; L-ornithine and N-acetyl-L-glutamate from L-glutamate and N(2)-acetyl-L-ornithine (cyclic): step 1/1. It functions in the pathway amino-acid biosynthesis; L-arginine biosynthesis; N(2)-acetyl-L-ornithine from L-glutamate: step 1/4. In terms of biological role, catalyzes two activities which are involved in the cyclic version of arginine biosynthesis: the synthesis of N-acetylglutamate from glutamate and acetyl-CoA as the acetyl donor, and of ornithine by transacetylation between N(2)-acetylornithine and glutamate. The protein is Arginine biosynthesis bifunctional protein ArgJ 3 of Streptomyces clavuligerus.